The chain runs to 149 residues: FAD synthase (149 aa).

Residues 9–10 (VF), 14–17 (HPGH), Asp93, and Tyr120 contribute to the ATP site.

This sequence belongs to the archaeal FAD synthase family. Homodimer. A divalent metal cation serves as cofactor.

The catalysed reaction is FMN + ATP + H(+) = FAD + diphosphate. Its pathway is cofactor biosynthesis; FAD biosynthesis; FAD from FMN: step 1/1. In terms of biological role, catalyzes the transfer of the AMP portion of ATP to flavin mononucleotide (FMN) to produce flavin adenine dinucleotide (FAD) coenzyme. The chain is FAD synthase from Aciduliprofundum boonei (strain DSM 19572 / T469).